The chain runs to 220 residues: uncharacterized protein (220 aa).

The chain crosses the membrane as a helical span at residues 10–30 (FFIIGGVILSIGLILFFLLGF).

The protein localises to the membrane. This is an uncharacterized protein from Methanocaldococcus jannaschii (strain ATCC 43067 / DSM 2661 / JAL-1 / JCM 10045 / NBRC 100440) (Methanococcus jannaschii).